Reading from the N-terminus, the 359-residue chain is Peptide methionine sulfoxide reductase MsrA/MsrB (359 aa).

Positions 36-189 (RVIYLAGGCF…PGGYCHIDLK (154 aa)) are peptide methionine sulfoxide reductase A. Cys-44 is a catalytic residue. Positions 206–329 (DEVLKKKLTK…NSAALRFIPL (124 aa)) constitute a MsrB domain. Cys-318 functions as the Nucleophile in the catalytic mechanism.

In the N-terminal section; belongs to the MsrA Met sulfoxide reductase family. This sequence in the C-terminal section; belongs to the MsrB Met sulfoxide reductase family.

It carries out the reaction L-methionyl-[protein] + [thioredoxin]-disulfide + H2O = L-methionyl-(S)-S-oxide-[protein] + [thioredoxin]-dithiol. The catalysed reaction is [thioredoxin]-disulfide + L-methionine + H2O = L-methionine (S)-S-oxide + [thioredoxin]-dithiol. It catalyses the reaction L-methionyl-[protein] + [thioredoxin]-disulfide + H2O = L-methionyl-(R)-S-oxide-[protein] + [thioredoxin]-dithiol. In terms of biological role, has an important function as a repair enzyme for proteins that have been inactivated by oxidation. Catalyzes the reversible oxidation-reduction of methionine sulfoxide in proteins to methionine. The protein is Peptide methionine sulfoxide reductase MsrA/MsrB (msrAB) of Helicobacter pylori (strain J99 / ATCC 700824) (Campylobacter pylori J99).